The chain runs to 730 residues: Heterogeneous nuclear ribonucleoprotein M (730 aa).

The span at 1–13 shows a compositional bias: low complexity; the sequence is MAAGVEAAAEVAA. The interval 1–62 is disordered; the sequence is MAAGVEAAAE…NIKRGGNRFE (62 aa). An N-acetylalanine modification is found at A2. Residue K17 forms a Glycyl lysine isopeptide (Lys-Gly) (interchain with G-Cter in SUMO2) linkage. Residue S29 is modified to Phosphoserine. Residue K37 forms a Glycyl lysine isopeptide (Lys-Gly) (interchain with G-Cter in SUMO2) linkage. Residues 38-50 are compositionally biased toward basic and acidic residues; that stretch reads GEGERPAQNEKRK. Glycyl lysine isopeptide (Lys-Gly) (interchain with G-Cter in SUMO2) cross-links involve residues K69 and K83. 2 RRM domains span residues 71 to 149 and 204 to 281; these read YRAF…EDPD and STVF…MDER. Phosphoserine is present on S86. Glycyl lysine isopeptide (Lys-Gly) (interchain with G-Cter in SUMO2) cross-links involve residues K88 and K127. K134 is modified (N6-acetyllysine; alternate). Residue K134 forms a Glycyl lysine isopeptide (Lys-Gly) (interchain with G-Cter in SUMO2); alternate linkage. Glycyl lysine isopeptide (Lys-Gly) (interchain with G-Cter in SUMO2) cross-links involve residues K143 and K145. S204 carries the post-translational modification Phosphoserine. K221 is covalently cross-linked (Glycyl lysine isopeptide (Lys-Gly) (interchain with G-Cter in SUMO2)). N6-acetyllysine; alternate is present on K277. K277 is covalently cross-linked (Glycyl lysine isopeptide (Lys-Gly) (interchain with G-Cter in SUMO2); alternate). Residues K285 and K345 each participate in a glycyl lysine isopeptide (Lys-Gly) (interchain with G-Cter in SUMO2) cross-link. A phosphoserine mark is found at S365 and S377. Residues K381 and K388 each participate in a glycyl lysine isopeptide (Lys-Gly) (interchain with G-Cter in SUMO2) cross-link. S397 carries the post-translational modification Phosphoserine. Tandem repeats lie at residues 400-405, 407-412, 415-420, and 426-431. Residues 400-608 are 27 X 6 AA repeats of [GEVSTPAN]-[ILMV]-[DE]-[RH]-[MLVI]-[GAV]; that stretch reads GIERMGPGID…ALGAGIERMG (209 aa). S432 is modified (phosphoserine). 3 repeat units span residues 433-438, 440-445, and 446-451. S452 carries the phosphoserine modification. Tandem repeats lie at residues 453 to 458, 461 to 466, 468 to 473, and 475 to 480. S468 bears the Phosphoserine mark. Position 481 is a phosphoserine (S481). 16 consecutive repeat copies span residues 482–487, 493–498, 500–505, 507–512, 514–519, 521–526, 528–533, 540–545, 547–552, 554–559, 562–566, 567–572, 575–579, 580–585, 588–593, and 603–608. Residue R496 is modified to Omega-N-methylarginine. Position 528 is a phosphoserine (S528). S575 bears the Phosphoserine mark. Phosphoserine is present on S588. S618, S633, and S637 each carry phosphoserine. K651 is covalently cross-linked (Glycyl lysine isopeptide (Lys-Gly) (interchain with G-Cter in SUMO2)). The RRM 3 domain maps to 653 to 729; it reads CQIFVRNLPF…REIDVRIDRN (77 aa). A Phosphothreonine modification is found at T665. Residue K667 forms a Glycyl lysine isopeptide (Lys-Gly) (interchain with G-Cter in SUMO2) linkage. Residue K672 is modified to N6-acetyllysine. Glycyl lysine isopeptide (Lys-Gly) (interchain with G-Cter in SUMO2) cross-links involve residues K685 and K692. K698 is modified (N6-acetyllysine; alternate). K698 is covalently cross-linked (Glycyl lysine isopeptide (Lys-Gly) (interchain with G-Cter in SUMO2); alternate). K698 is covalently cross-linked (Glycyl lysine isopeptide (Lys-Gly) (interchain with G-Cter in SUMO1); alternate). The residue at position 701 (S701) is a Phosphoserine. K716 is covalently cross-linked (Glycyl lysine isopeptide (Lys-Gly) (interchain with G-Cter in SUMO2)).

In terms of assembly, identified in the spliceosome C complex. Interacts with PPIA/CYPA. Post-translationally, sumoylated.

The protein resides in the nucleus. Its subcellular location is the nucleolus. Pre-mRNA binding protein in vivo, binds avidly to poly(G) and poly(U) RNA homopolymers in vitro. Involved in splicing. Acts as a receptor for carcinoembryonic antigen in Kupffer cells, may initiate a series of signaling events leading to tyrosine phosphorylation of proteins and induction of IL-1 alpha, IL-6, IL-10 and tumor necrosis factor alpha cytokines. The polypeptide is Heterogeneous nuclear ribonucleoprotein M (HNRNPM) (Homo sapiens (Human)).